The following is a 572-amino-acid chain: Proline--tRNA ligase (572 aa).

It belongs to the class-II aminoacyl-tRNA synthetase family. ProS type 1 subfamily. As to quaternary structure, homodimer.

It is found in the cytoplasm. The enzyme catalyses tRNA(Pro) + L-proline + ATP = L-prolyl-tRNA(Pro) + AMP + diphosphate. Functionally, catalyzes the attachment of proline to tRNA(Pro) in a two-step reaction: proline is first activated by ATP to form Pro-AMP and then transferred to the acceptor end of tRNA(Pro). As ProRS can inadvertently accommodate and process non-cognate amino acids such as alanine and cysteine, to avoid such errors it has two additional distinct editing activities against alanine. One activity is designated as 'pretransfer' editing and involves the tRNA(Pro)-independent hydrolysis of activated Ala-AMP. The other activity is designated 'posttransfer' editing and involves deacylation of mischarged Ala-tRNA(Pro). The misacylated Cys-tRNA(Pro) is not edited by ProRS. The sequence is that of Proline--tRNA ligase from Psychrobacter cryohalolentis (strain ATCC BAA-1226 / DSM 17306 / VKM B-2378 / K5).